The chain runs to 184 residues: ATP synthase subunit b (184 aa).

The chain crosses the membrane as a helical span at residues 15 to 34; the sequence is VQPGLIFWTLVTFVIAAVVL.

The protein belongs to the ATPase B chain family. In terms of assembly, F-type ATPases have 2 components, F(1) - the catalytic core - and F(0) - the membrane proton channel. F(1) has five subunits: alpha(3), beta(3), gamma(1), delta(1), epsilon(1). F(0) has three main subunits: a(1), b(2) and c(10-14). The alpha and beta chains form an alternating ring which encloses part of the gamma chain. F(1) is attached to F(0) by a central stalk formed by the gamma and epsilon chains, while a peripheral stalk is formed by the delta and b chains.

It localises to the cell inner membrane. In terms of biological role, f(1)F(0) ATP synthase produces ATP from ADP in the presence of a proton or sodium gradient. F-type ATPases consist of two structural domains, F(1) containing the extramembraneous catalytic core and F(0) containing the membrane proton channel, linked together by a central stalk and a peripheral stalk. During catalysis, ATP synthesis in the catalytic domain of F(1) is coupled via a rotary mechanism of the central stalk subunits to proton translocation. Functionally, component of the F(0) channel, it forms part of the peripheral stalk, linking F(1) to F(0). This is ATP synthase subunit b from Myxococcus xanthus (strain DK1622).